A 286-amino-acid chain; its full sequence is Eukaryotic translation initiation factor 3 subunit J (286 aa).

3 disordered regions span residues 1–35 (MSWD…DSWD), 141–162 (AASG…HPLF), and 229–258 (KAER…AVKT). Positions 21–35 (WEEEGNDEPLLDSWD) are enriched in acidic residues. Positions 35-75 (DIDEEEVARKKKEEEAKKKAEKEALKKKQEESKAKKLSKNK) form a coiled coil.

It belongs to the eIF-3 subunit J family. As to quaternary structure, component of the eukaryotic translation initiation factor 3 (eIF-3) complex.

It localises to the cytoplasm. Its function is as follows. Component of the eukaryotic translation initiation factor 3 (eIF-3) complex, which is involved in protein synthesis of a specialized repertoire of mRNAs and, together with other initiation factors, stimulates binding of mRNA and methionyl-tRNAi to the 40S ribosome. The eIF-3 complex specifically targets and initiates translation of a subset of mRNAs involved in cell proliferation. The polypeptide is Eukaryotic translation initiation factor 3 subunit J (Debaryomyces hansenii (strain ATCC 36239 / CBS 767 / BCRC 21394 / JCM 1990 / NBRC 0083 / IGC 2968) (Yeast)).